The sequence spans 246 residues: Large ribosomal subunit protein uL3 (246 aa).

Q151 is modified (N5-methylglutamine).

This sequence belongs to the universal ribosomal protein uL3 family. In terms of assembly, part of the 50S ribosomal subunit. Forms a cluster with proteins L14 and L19. Post-translationally, methylated by PrmB.

In terms of biological role, one of the primary rRNA binding proteins, it binds directly near the 3'-end of the 23S rRNA, where it nucleates assembly of the 50S subunit. The polypeptide is Large ribosomal subunit protein uL3 (Bartonella quintana (strain Toulouse) (Rochalimaea quintana)).